The following is a 461-amino-acid chain: Siroheme synthase (461 aa).

The interval 1 to 204 (MRYLPLFVYL…GNFRKANRVI (204 aa)) is precorrin-2 dehydrogenase /sirohydrochlorin ferrochelatase. NAD(+) is bound by residues 22–23 (IV) and 43–44 (KT). S128 is subject to Phosphoserine. The segment at 218-461 (GSVSLVGAGP…HNEISWFGNG (244 aa)) is uroporphyrinogen-III C-methyltransferase. P227 contacts S-adenosyl-L-methionine. D250 serves as the catalytic Proton acceptor. Catalysis depends on K272, which acts as the Proton donor. Residues 303-305 (GGD), I308, M386, and G415 contribute to the S-adenosyl-L-methionine site.

It in the N-terminal section; belongs to the precorrin-2 dehydrogenase / sirohydrochlorin ferrochelatase family. The protein in the C-terminal section; belongs to the precorrin methyltransferase family.

The enzyme catalyses uroporphyrinogen III + 2 S-adenosyl-L-methionine = precorrin-2 + 2 S-adenosyl-L-homocysteine + H(+). It catalyses the reaction precorrin-2 + NAD(+) = sirohydrochlorin + NADH + 2 H(+). The catalysed reaction is siroheme + 2 H(+) = sirohydrochlorin + Fe(2+). The protein operates within cofactor biosynthesis; adenosylcobalamin biosynthesis; precorrin-2 from uroporphyrinogen III: step 1/1. It functions in the pathway cofactor biosynthesis; adenosylcobalamin biosynthesis; sirohydrochlorin from precorrin-2: step 1/1. It participates in porphyrin-containing compound metabolism; siroheme biosynthesis; precorrin-2 from uroporphyrinogen III: step 1/1. Its pathway is porphyrin-containing compound metabolism; siroheme biosynthesis; siroheme from sirohydrochlorin: step 1/1. The protein operates within porphyrin-containing compound metabolism; siroheme biosynthesis; sirohydrochlorin from precorrin-2: step 1/1. Functionally, multifunctional enzyme that catalyzes the SAM-dependent methylations of uroporphyrinogen III at position C-2 and C-7 to form precorrin-2 via precorrin-1. Then it catalyzes the NAD-dependent ring dehydrogenation of precorrin-2 to yield sirohydrochlorin. Finally, it catalyzes the ferrochelation of sirohydrochlorin to yield siroheme. The sequence is that of Siroheme synthase from Blochmanniella floridana.